The sequence spans 512 residues: Alpha-amylase (512 aa).

The signal sequence occupies residues 1–15 (MKLFVLIALFGLGFA). 3 disulfides stabilise this stretch: Cys43-Cys101, Cys85-Cys130, and Cys156-Cys175. Residues Asn115, Arg173, and Asp182 each contribute to the Ca(2+) site. Arg210 contributes to the chloride binding site. The active-site Nucleophile is the Asp212. His216 lines the Ca(2+) pocket. Catalysis depends on Glu248, which acts as the Proton donor. A chloride-binding site is contributed by Arg352. 2 disulfide bridges follow: Cys394/Cys400 and Cys466/Cys478. N-linked (GlcNAc...) asparagine glycosylation occurs at Asn496.

This sequence belongs to the glycosyl hydrolase 13 family. Ca(2+) serves as cofactor. The cofactor is chloride.

The protein resides in the secreted. The enzyme catalyses Endohydrolysis of (1-&gt;4)-alpha-D-glucosidic linkages in polysaccharides containing three or more (1-&gt;4)-alpha-linked D-glucose units.. Catalyzes the hydrolysis of alpha-1,4 glycosidic linkages in starch, glycogen and similar oligosaccharides. The protein is Alpha-amylase of Oryzias latipes (Japanese rice fish).